The chain runs to 330 residues: Tryptophan--tRNA ligase (330 aa).

ATP-binding positions include 9-11 (QPT) and 17-18 (GN). The 'HIGH' region motif lies at 10 to 18 (PTGDPHIGN). L-tryptophan is bound at residue D136. Residues 148–150 (GED), I187, and 195–199 (KMSKS) contribute to the ATP site. The short motif at 195 to 199 (KMSKS) is the 'KMSKS' region element.

The protein belongs to the class-I aminoacyl-tRNA synthetase family. In terms of assembly, homodimer.

The protein localises to the cytoplasm. The catalysed reaction is tRNA(Trp) + L-tryptophan + ATP = L-tryptophyl-tRNA(Trp) + AMP + diphosphate + H(+). Catalyzes the attachment of tryptophan to tRNA(Trp). The protein is Tryptophan--tRNA ligase of Deinococcus radiodurans (strain ATCC 13939 / DSM 20539 / JCM 16871 / CCUG 27074 / LMG 4051 / NBRC 15346 / NCIMB 9279 / VKM B-1422 / R1).